The chain runs to 130 residues: Large ribosomal subunit protein bL19 (130 aa).

Belongs to the bacterial ribosomal protein bL19 family.

This protein is located at the 30S-50S ribosomal subunit interface and may play a role in the structure and function of the aminoacyl-tRNA binding site. This chain is Large ribosomal subunit protein bL19, found in Cupriavidus taiwanensis (strain DSM 17343 / BCRC 17206 / CCUG 44338 / CIP 107171 / LMG 19424 / R1) (Ralstonia taiwanensis (strain LMG 19424)).